The sequence spans 733 residues: MKTALVLILATATLAVAYPSSTQDYRVVADKTFLTRQRDFLRLLVRIEQPNYYADQYEVGNAYDIEANINNYKYPHVVKNFLSAYKRGMLPRGVPYSPYYTTQSYETKLLFDLFYYANDYDTFYKTVCWARDRINEGQFLYAFSTAVFQREDLSDYILPPPYEIYPYLFVDSEVIQKAYETRMSDVHLTAPKTYIFPVNYTVANPEQELYYWYEDVGLNTYYAYYYFNYPTFFNETEYGVHFDRRGELFYYTRQQLYARQFLERHSHDLGEVEPVHYDRPFQTEYYPRLRYSNGQEVPPRPYEYSRRSLYYSNGNSYYYGNYYGGNNNYYTGNYYTGNYHPSYYYGYSTEHDYYYPEDLQIYDRRVLDSIDYGYVFSYPDHKYPLYEDYTKGIDYLGDVIEGNGDTVNRRYYGSIYHFYRQLAGKNVDPYNDSGFAPSALQNIYTALRDPANFHILKHINSYFQRYKGYLPRYTYDELVFPGVKIENVDVGKLVTYFDYFDVDIDNVVNVKVAEDGKYVDYRARQTRLNHKPFTYNIEVNSEQATDVYVRVFLGPKYDYLGREYDLNDRRHYFVELDRFPYKVQAGKTTITRNSRESSVVSHDYPSFRTLLRKVFDAYEGKEQFYYDKSERYCGYPERLLLPKGKTGGQTYTFYVMVTPYVKQDDHDFEPYNYKSFSYCGVGANHKFPDDKPFGYPFDRVLYSQEFVTPNMYFKDVVIYHKKYEEINAATVQQ.

An N-terminal signal peptide occupies residues 1 to 17; it reads MKTALVLILATATLAVA. 3 N-linked (GlcNAc...) asparagine glycosylation sites follow: Asn199, Asn234, and Asn431.

The protein belongs to the hemocyanin family. In terms of assembly, homohexamer.

The protein localises to the secreted. It is found in the extracellular space. In terms of biological role, larval storage protein (LSP) which may serve as a store of amino acids for synthesis of adult proteins. This is Hexamerin from Blaberus discoidalis (Tropical cockroach).